A 198-amino-acid chain; its full sequence is Small ribosomal subunit protein uS4 (198 aa).

One can recognise an S4 RNA-binding domain in the interval 91–154 (SRLDNVVYRL…KNLNIVQEAV (64 aa)).

The protein belongs to the universal ribosomal protein uS4 family. As to quaternary structure, part of the 30S ribosomal subunit. Contacts protein S5. The interaction surface between S4 and S5 is involved in control of translational fidelity.

Functionally, one of the primary rRNA binding proteins, it binds directly to 16S rRNA where it nucleates assembly of the body of the 30S subunit. With S5 and S12 plays an important role in translational accuracy. This chain is Small ribosomal subunit protein uS4, found in Onion yellows phytoplasma (strain OY-M).